The following is a 571-amino-acid chain: Sulfite reductase [NADPH] hemoprotein beta-component (571 aa).

Residues C436, C442, C481, and C485 each contribute to the [4Fe-4S] cluster site. C485 lines the siroheme pocket.

It belongs to the nitrite and sulfite reductase 4Fe-4S domain family. As to quaternary structure, alpha(8)-beta(8). The alpha component is a flavoprotein, the beta component is a hemoprotein. Requires siroheme as cofactor. It depends on [4Fe-4S] cluster as a cofactor.

It carries out the reaction hydrogen sulfide + 3 NADP(+) + 3 H2O = sulfite + 3 NADPH + 4 H(+). It participates in sulfur metabolism; hydrogen sulfide biosynthesis; hydrogen sulfide from sulfite (NADPH route): step 1/1. Functionally, component of the sulfite reductase complex that catalyzes the 6-electron reduction of sulfite to sulfide. This is one of several activities required for the biosynthesis of L-cysteine from sulfate. This chain is Sulfite reductase [NADPH] hemoprotein beta-component (cysI), found in Bacillus subtilis (strain 168).